A 278-amino-acid polypeptide reads, in one-letter code: Rhamnulose-1-phosphate aldolase (278 aa).

E116 is a catalytic residue. Positions 139, 141, and 210 each coordinate Zn(2+).

This sequence belongs to the aldolase class II family. RhaD subfamily. Requires Zn(2+) as cofactor.

Its subcellular location is the cytoplasm. The enzyme catalyses L-rhamnulose 1-phosphate = (S)-lactaldehyde + dihydroxyacetone phosphate. It functions in the pathway carbohydrate degradation; L-rhamnose degradation; glycerone phosphate from L-rhamnose: step 3/3. Functionally, catalyzes the reversible cleavage of L-rhamnulose-1-phosphate to dihydroxyacetone phosphate (DHAP) and L-lactaldehyde. This Listeria welshimeri serovar 6b (strain ATCC 35897 / DSM 20650 / CCUG 15529 / CIP 8149 / NCTC 11857 / SLCC 5334 / V8) protein is Rhamnulose-1-phosphate aldolase.